The chain runs to 422 residues: Glutamyl-tRNA reductase (422 aa).

Residues 50–53, S110, 115–117, and Q121 each bind substrate; these read TCNR and ETQ. C51 acts as the Nucleophile in catalysis. 190–195 lines the NADP(+) pocket; the sequence is GAGEMS.

The protein belongs to the glutamyl-tRNA reductase family. In terms of assembly, homodimer.

The catalysed reaction is (S)-4-amino-5-oxopentanoate + tRNA(Glu) + NADP(+) = L-glutamyl-tRNA(Glu) + NADPH + H(+). It functions in the pathway porphyrin-containing compound metabolism; protoporphyrin-IX biosynthesis; 5-aminolevulinate from L-glutamyl-tRNA(Glu): step 1/2. Catalyzes the NADPH-dependent reduction of glutamyl-tRNA(Glu) to glutamate 1-semialdehyde (GSA). This Campylobacter fetus subsp. fetus (strain 82-40) protein is Glutamyl-tRNA reductase.